We begin with the raw amino-acid sequence, 240 residues long: Uridylate kinase (240 aa).

An ATP-binding site is contributed by 13 to 16; the sequence is KISG. Residue glycine 55 participates in UMP binding. ATP contacts are provided by glycine 56 and arginine 60. Residues aspartate 75 and 136–143 each bind UMP; that span reads TGNPFFTT. ATP-binding residues include threonine 163, glutamine 164, tyrosine 169, and aspartate 172.

It belongs to the UMP kinase family. Homohexamer.

It localises to the cytoplasm. The enzyme catalyses UMP + ATP = UDP + ADP. The protein operates within pyrimidine metabolism; CTP biosynthesis via de novo pathway; UDP from UMP (UMPK route): step 1/1. Inhibited by UTP. Functionally, catalyzes the reversible phosphorylation of UMP to UDP. The chain is Uridylate kinase from Paramagnetospirillum magneticum (strain ATCC 700264 / AMB-1) (Magnetospirillum magneticum).